Here is a 144-residue protein sequence, read N- to C-terminus: Cell division protein SepF (144 aa).

The protein belongs to the SepF family. As to quaternary structure, homodimer. Interacts with FtsZ.

It localises to the cytoplasm. In terms of biological role, cell division protein that is part of the divisome complex and is recruited early to the Z-ring. Probably stimulates Z-ring formation, perhaps through the cross-linking of FtsZ protofilaments. Its function overlaps with FtsA. In Geobacillus sp. (strain WCH70), this protein is Cell division protein SepF.